Reading from the N-terminus, the 450-residue chain is tRNA modification GTPase MnmE (450 aa).

(6S)-5-formyl-5,6,7,8-tetrahydrofolate-binding residues include arginine 23, glutamate 81, and lysine 120. The 158-residue stretch at 216-373 folds into the TrmE-type G domain; it reads GIHLVLAGKP…LLKKIATLAG (158 aa). Residues 226–231, 245–251, 270–273, and 337–340 each bind GTP; these read NAGKSS, TPQAGTT, DTAG, and NKAD. Serine 230 and threonine 251 together coordinate Mg(2+). Residue lysine 450 participates in (6S)-5-formyl-5,6,7,8-tetrahydrofolate binding.

This sequence belongs to the TRAFAC class TrmE-Era-EngA-EngB-Septin-like GTPase superfamily. TrmE GTPase family. In terms of assembly, homodimer. Heterotetramer of two MnmE and two MnmG subunits. K(+) is required as a cofactor.

It is found in the cytoplasm. In terms of biological role, exhibits a very high intrinsic GTPase hydrolysis rate. Involved in the addition of a carboxymethylaminomethyl (cmnm) group at the wobble position (U34) of certain tRNAs, forming tRNA-cmnm(5)s(2)U34. The polypeptide is tRNA modification GTPase MnmE (Dichelobacter nodosus (strain VCS1703A)).